The following is a 335-amino-acid chain: NADH-quinone oxidoreductase subunit H (335 aa).

A run of 8 helical transmembrane segments spans residues 11 to 31, 81 to 101, 114 to 134, 154 to 174, 187 to 207, 238 to 258, 270 to 290, and 307 to 327; these read VILT…AGAL, VIFT…FAII, IGLL…LFAG, VSYE…VGSF, LWFI…GVAV, FFVG…TLFF, QLSF…FILL, and WKFC…VVLW.

The protein belongs to the complex I subunit 1 family. In terms of assembly, NDH-1 is composed of 13 different subunits. Subunits NuoA, H, J, K, L, M, N constitute the membrane sector of the complex.

It localises to the cell inner membrane. It carries out the reaction a quinone + NADH + 5 H(+)(in) = a quinol + NAD(+) + 4 H(+)(out). Its function is as follows. NDH-1 shuttles electrons from NADH, via FMN and iron-sulfur (Fe-S) centers, to quinones in the respiratory chain. The immediate electron acceptor for the enzyme in this species is believed to be ubiquinone. Couples the redox reaction to proton translocation (for every two electrons transferred, four hydrogen ions are translocated across the cytoplasmic membrane), and thus conserves the redox energy in a proton gradient. This subunit may bind ubiquinone. This is NADH-quinone oxidoreductase subunit H from Pseudomonas fluorescens (strain ATCC BAA-477 / NRRL B-23932 / Pf-5).